The following is a 201-amino-acid chain: Retinol-binding protein 4 (201 aa).

The first 18 residues, 1 to 18, serve as a signal peptide directing secretion; sequence MEWVWALVVLAALGSAGA. Cystine bridges form between Cys22–Cys178, Cys88–Cys192, and Cys138–Cys147. A substrate-binding site is contributed by Gln116. Arg139 carries the omega-N-methylarginine modification.

Belongs to the calycin superfamily. Lipocalin family. In terms of assembly, interacts with TTR. Interaction with TTR prevents its loss by filtration through the kidney glomeruli. Interacts with STRA6.

Its subcellular location is the secreted. Its function is as follows. Retinol-binding protein that mediates retinol transport in blood plasma. Delivers retinol from the liver stores to the peripheral tissues. Transfers the bound all-trans retinol to STRA6, that then facilitates retinol transport across the cell membrane. This Equus caballus (Horse) protein is Retinol-binding protein 4 (RBP4).